We begin with the raw amino-acid sequence, 671 residues long: DNA ligase (671 aa).

NAD(+)-binding positions include 35–39 (DQQYD), 84–85 (SL), and E113. Catalysis depends on K115, which acts as the N6-AMP-lysine intermediate. NAD(+)-binding residues include R136, E170, K285, and K309. Zn(2+)-binding residues include C403, C406, C421, and C426. Residues 588–671 (TTQTIFTNKK…QIIENSQIKL (84 aa)) enclose the BRCT domain.

It belongs to the NAD-dependent DNA ligase family. LigA subfamily. Mg(2+) is required as a cofactor. It depends on Mn(2+) as a cofactor.

It carries out the reaction NAD(+) + (deoxyribonucleotide)n-3'-hydroxyl + 5'-phospho-(deoxyribonucleotide)m = (deoxyribonucleotide)n+m + AMP + beta-nicotinamide D-nucleotide.. In terms of biological role, DNA ligase that catalyzes the formation of phosphodiester linkages between 5'-phosphoryl and 3'-hydroxyl groups in double-stranded DNA using NAD as a coenzyme and as the energy source for the reaction. It is essential for DNA replication and repair of damaged DNA. The polypeptide is DNA ligase (Onion yellows phytoplasma (strain OY-M)).